A 92-amino-acid polypeptide reads, in one-letter code: Small ribosomal subunit protein uS19c (92 aa).

It belongs to the universal ribosomal protein uS19 family.

Its subcellular location is the plastid. The protein localises to the chloroplast. Protein S19 forms a complex with S13 that binds strongly to the 16S ribosomal RNA. This Liriodendron tulipifera (Tuliptree) protein is Small ribosomal subunit protein uS19c.